Reading from the N-terminus, the 274-residue chain is Diaminopimelate epimerase (274 aa).

N11, Q44, and N64 together coordinate substrate. Catalysis depends on C73, which acts as the Proton donor. Substrate is bound by residues 74–75, N157, N190, and 208–209; these read GN and ER. The Proton acceptor role is filled by C217. 218-219 contributes to the substrate binding site; it reads GS.

This sequence belongs to the diaminopimelate epimerase family. In terms of assembly, homodimer.

The protein resides in the cytoplasm. It carries out the reaction (2S,6S)-2,6-diaminopimelate = meso-2,6-diaminopimelate. The protein operates within amino-acid biosynthesis; L-lysine biosynthesis via DAP pathway; DL-2,6-diaminopimelate from LL-2,6-diaminopimelate: step 1/1. Its function is as follows. Catalyzes the stereoinversion of LL-2,6-diaminopimelate (L,L-DAP) to meso-diaminopimelate (meso-DAP), a precursor of L-lysine and an essential component of the bacterial peptidoglycan. In Pectobacterium carotovorum subsp. carotovorum (strain PC1), this protein is Diaminopimelate epimerase.